The chain runs to 114 residues: Iron-sulfur cluster insertion protein ErpA (114 aa).

Residues cysteine 42, cysteine 106, and cysteine 108 each contribute to the iron-sulfur cluster site.

The protein belongs to the HesB/IscA family. In terms of assembly, homodimer. Requires iron-sulfur cluster as cofactor.

In terms of biological role, required for insertion of 4Fe-4S clusters for at least IspG. The sequence is that of Iron-sulfur cluster insertion protein ErpA from Haemophilus influenzae (strain PittEE).